A 194-amino-acid chain; its full sequence is Large ribosomal subunit protein bL9 (194 aa).

The interval 169–194 (DDINDNARPENFFDPNAEFDGGEDNA) is disordered.

Belongs to the bacterial ribosomal protein bL9 family.

Functionally, binds to the 23S rRNA. The polypeptide is Large ribosomal subunit protein bL9 (Mesorhizobium japonicum (strain LMG 29417 / CECT 9101 / MAFF 303099) (Mesorhizobium loti (strain MAFF 303099))).